The primary structure comprises 93 residues: DNA-directed RNA polymerase subunit omega (93 aa).

This sequence belongs to the RNA polymerase subunit omega family. The RNAP catalytic core consists of 2 alpha, 1 beta, 1 beta' and 1 omega subunit. When a sigma factor is associated with the core the holoenzyme is formed, which can initiate transcription.

It carries out the reaction RNA(n) + a ribonucleoside 5'-triphosphate = RNA(n+1) + diphosphate. Its function is as follows. Promotes RNA polymerase assembly. Latches the N- and C-terminal regions of the beta' subunit thereby facilitating its interaction with the beta and alpha subunits. This chain is DNA-directed RNA polymerase subunit omega, found in Shewanella piezotolerans (strain WP3 / JCM 13877).